A 225-amino-acid polypeptide reads, in one-letter code: Heptaprenylglyceryl phosphate synthase (225 aa).

Residue lysine 6 coordinates sn-glycerol 1-phosphate. Positions 8 and 34 each coordinate Mg(2+). Residues 153-158, glycine 183, and 203-204 contribute to the sn-glycerol 1-phosphate site; these read YVEYSG and GN.

Belongs to the GGGP/HepGP synthase family. Group I subfamily. As to quaternary structure, homodimer. The cofactor is Mg(2+).

It catalyses the reaction sn-glycerol 1-phosphate + all-trans-heptaprenyl diphosphate = 3-heptaprenyl-sn-glycero-1-phosphate + diphosphate. The protein operates within membrane lipid metabolism; glycerophospholipid metabolism. Functionally, prenyltransferase that catalyzes in vivo the transfer of the heptaprenyl moiety of heptaprenyl pyrophosphate (HepPP; 35 carbon atoms) to the C3 hydroxyl of sn-glycerol-1-phosphate (G1P), producing heptaprenylglyceryl phosphate (HepGP). This reaction is an ether-bond-formation step in the biosynthesis of archaea-type G1P-based membrane lipids found in Bacillales. This is Heptaprenylglyceryl phosphate synthase from Listeria monocytogenes serotype 4a (strain HCC23).